The primary structure comprises 740 residues: Catalase-peroxidase (740 aa).

Residues 1 to 16 are compositionally biased toward basic and acidic residues; that stretch reads MSENHDAIVTDAKTEE. Positions 1–38 are disordered; it reads MSENHDAIVTDAKTEETDGCPVAHGRAPHPTQGGGNRQ. Residues 108-231 constitute a cross-link (tryptophyl-tyrosyl-methioninium (Trp-Tyr) (with M-257)); sequence WHSAGTYRIS…LGAVQMGLIY (124 aa). Histidine 109 functions as the Proton acceptor in the catalytic mechanism. Residues 231–257 constitute a cross-link (tryptophyl-tyrosyl-methioninium (Tyr-Met) (with W-108)); that stretch reads YVNPEGPNGNPDPIAAARDIRETFRRM. Residue histidine 272 participates in heme b binding.

This sequence belongs to the peroxidase family. Peroxidase/catalase subfamily. In terms of assembly, homodimer. Heme b is required as a cofactor. In terms of processing, formation of the three residue Trp-Tyr-Met cross-link is important for the catalase, but not the peroxidase activity of the enzyme.

It carries out the reaction H2O2 + AH2 = A + 2 H2O. The enzyme catalyses 2 H2O2 = O2 + 2 H2O. Its function is as follows. Bifunctional enzyme with both catalase and broad-spectrum peroxidase activity. The sequence is that of Catalase-peroxidase from Streptomyces coelicolor (strain ATCC BAA-471 / A3(2) / M145).